Consider the following 477-residue polypeptide: MKVNLPAFERAGVMVVGDVMLDRYWYGPTCRISPEAPVPVVKVNTVEERPGGAANVAMNIASLGANARLVGLTGIDDAARALSKTLAEVNVKCDFVSVPTHPTITKLRVLSRNQQLIRLDFEEGFEGVDPQPLHERINQALGSIGALVLSDYAKGALTSVQTMISLARQAGVPVLIDPKGTDFERYRGATLLTPNLSEFEAVAGKCKSEDELVERGMKLIADYDLSALLVTRSEQGMTLLQPNKAPLHMPTQAQEVYDVTGAGDTVIGVLAATLAAGNTLEEACYFANAAAGVVVGKLGTSTVSPIELENAVRGRADTGFGVMTEEELRQAVASARKRGEKVVMTNGVFDILHAGHVSYLANARKLGDRLIVAVNSDASTKRLKGDSRPVNPLEQRMIVLGALESVDWVVSFEEDTPQRLIAGILPDLLVKGGDYKPEEIAGSEEVWANGGEVMVLNFEDGCSTTNIIKKIQTESEK.

The ribokinase stretch occupies residues 1 to 318 (MKVNLPAFER…ENAVRGRADT (318 aa)). 195–198 (NLSE) lines the ATP pocket. The active site involves Asp264. The interval 344 to 477 (MTNGVFDILH…IKKIQTESEK (134 aa)) is cytidylyltransferase.

The protein in the N-terminal section; belongs to the carbohydrate kinase PfkB family. In the C-terminal section; belongs to the cytidylyltransferase family. Homodimer.

The enzyme catalyses D-glycero-beta-D-manno-heptose 7-phosphate + ATP = D-glycero-beta-D-manno-heptose 1,7-bisphosphate + ADP + H(+). It catalyses the reaction D-glycero-beta-D-manno-heptose 1-phosphate + ATP + H(+) = ADP-D-glycero-beta-D-manno-heptose + diphosphate. It participates in nucleotide-sugar biosynthesis; ADP-L-glycero-beta-D-manno-heptose biosynthesis; ADP-L-glycero-beta-D-manno-heptose from D-glycero-beta-D-manno-heptose 7-phosphate: step 1/4. It functions in the pathway nucleotide-sugar biosynthesis; ADP-L-glycero-beta-D-manno-heptose biosynthesis; ADP-L-glycero-beta-D-manno-heptose from D-glycero-beta-D-manno-heptose 7-phosphate: step 3/4. Its function is as follows. Catalyzes the phosphorylation of D-glycero-D-manno-heptose 7-phosphate at the C-1 position to selectively form D-glycero-beta-D-manno-heptose-1,7-bisphosphate. Catalyzes the ADP transfer from ATP to D-glycero-beta-D-manno-heptose 1-phosphate, yielding ADP-D-glycero-beta-D-manno-heptose. This Salmonella enteritidis PT4 (strain P125109) protein is Bifunctional protein HldE.